Here is a 198-residue protein sequence, read N- to C-terminus: Glycerol-3-phosphate acyltransferase (198 aa).

5 helical membrane-spanning segments follow: residues 5–25, 56–76, 84–104, 114–134, and 158–178; these read LILL…LWIG, SIVT…PFFF, FWLL…FAGF, AGVI…IFLL, and LFMG…FVVW.

It belongs to the PlsY family. As to quaternary structure, probably interacts with PlsX.

It localises to the cell membrane. It catalyses the reaction an acyl phosphate + sn-glycerol 3-phosphate = a 1-acyl-sn-glycero-3-phosphate + phosphate. It participates in lipid metabolism; phospholipid metabolism. Its function is as follows. Catalyzes the transfer of an acyl group from acyl-phosphate (acyl-PO(4)) to glycerol-3-phosphate (G3P) to form lysophosphatidic acid (LPA). This enzyme utilizes acyl-phosphate as fatty acyl donor, but not acyl-CoA or acyl-ACP. This is Glycerol-3-phosphate acyltransferase from Listeria welshimeri serovar 6b (strain ATCC 35897 / DSM 20650 / CCUG 15529 / CIP 8149 / NCTC 11857 / SLCC 5334 / V8).